A 494-amino-acid chain; its full sequence is Glutamyl-tRNA(Gln) amidotransferase subunit A (494 aa).

Residues Lys79 and Ser159 each act as charge relay system in the active site. Ser183 acts as the Acyl-ester intermediate in catalysis.

It belongs to the amidase family. GatA subfamily. As to quaternary structure, heterotrimer of A, B and C subunits.

The catalysed reaction is L-glutamyl-tRNA(Gln) + L-glutamine + ATP + H2O = L-glutaminyl-tRNA(Gln) + L-glutamate + ADP + phosphate + H(+). Allows the formation of correctly charged Gln-tRNA(Gln) through the transamidation of misacylated Glu-tRNA(Gln) in organisms which lack glutaminyl-tRNA synthetase. The reaction takes place in the presence of glutamine and ATP through an activated gamma-phospho-Glu-tRNA(Gln). This is Glutamyl-tRNA(Gln) amidotransferase subunit A from Bartonella tribocorum (strain CIP 105476 / IBS 506).